The following is a 206-amino-acid chain: ATP-dependent Clp protease proteolytic subunit (206 aa).

The active-site Nucleophile is Ser101. His126 is an active-site residue.

The protein belongs to the peptidase S14 family. Component of the chloroplastic Clp protease core complex.

The protein resides in the plastid. The protein localises to the chloroplast stroma. It carries out the reaction Hydrolysis of proteins to small peptides in the presence of ATP and magnesium. alpha-casein is the usual test substrate. In the absence of ATP, only oligopeptides shorter than five residues are hydrolyzed (such as succinyl-Leu-Tyr-|-NHMec, and Leu-Tyr-Leu-|-Tyr-Trp, in which cleavage of the -Tyr-|-Leu- and -Tyr-|-Trp bonds also occurs).. Functionally, cleaves peptides in various proteins in a process that requires ATP hydrolysis. Has a chymotrypsin-like activity. Plays a major role in the degradation of misfolded proteins. The chain is ATP-dependent Clp protease proteolytic subunit from Solanum lycopersicum (Tomato).